We begin with the raw amino-acid sequence, 722 residues long: MWGLLLAVTAFAPSVGLGLGAPSASVPGLAPGSTLAPHSSVAQPSTKANETSERHVRLRVIKKKKIVVKKRKKLRHPGPLGTARPVVPTHPAKTLTLPEKQEPGCPPLGLESLRVSDSQLEASSSQSFGLGAHRGRLNIQSGLEDGDLYDGAWCAEQQDTEPWLQVDAKNPVRFAGIVTQGRNSVWRYDWVTSFKVQFSNDSQTWWKSRNSTGMDIVFPANSDAETPVLNLLPEPQVARFIRLLPQTWFQGGAPCLRAEILACPVSDPNDLFPEAHTLGSSNSLDFRHHNYKAMRKLMKQVNEQCPNITRIYSIGKSHQGLKLYVMEMSDHPGEHELGEPEVRYVAGMHGNEALGRELLLLLMQFLCHEFLRGDPRVTRLLTETRIHLLPSMNPDGYETAYHRGSELVGWAEGRWTHQGIDLNHNFADLNTQLWYAEDDGLVPDTVPNHHLPLPTYYTLPNATVAPETWAVIKWMKRIPFVLSANLHGGELVVSYPFDMTRTPWAARELTPTPDDAVFRWLSTVYAGTNRAMQDTDRRPCHSQDFSLHGNVINGADWHTVPGSMNDFSYLHTNCFEVTVELSCDKFPHEKELPQEWENNKDALLTYLEQVRMGITGVVRDKDTELGIADAVIAVEGINHDVTTAWGGDYWRLLTPGDYVVTASAEGYHTVRQHCQVTFEEGPVPCNFLLTKTPKERLRELLATRGKLPPDLRRKLERLRGQK.

The N-terminal stretch at 1–20 (MWGLLLAVTAFAPSVGLGLG) is a signal peptide. Residues 30-54 (APGSTLAPHSSVAQPSTKANETSER) form a disordered region. Over residues 36 to 49 (APHSSVAQPSTKAN) the composition is skewed to polar residues. N49, N200, N210, and N307 each carry an N-linked (GlcNAc...) asparagine glycan. The F5/8 type C domain maps to 103–263 (PGCPPLGLES…PCLRAEILAC (161 aa)). Residues C105 and C263 are joined by a disulfide bond. A Peptidase M14 domain is found at 287-610 (RHHNYKAMRK…DALLTYLEQV (324 aa)). Residues H349 and E352 each coordinate Zn(2+). The N-linked (GlcNAc...) asparagine glycan is linked to N461. H487 contributes to the Zn(2+) binding site. E580 acts as the Proton donor/acceptor in catalysis.

This sequence belongs to the peptidase M14 family. It depends on Zn(2+) as a cofactor. Strongly expressed in testis and spleen. Moderately expressed in salivary gland, brain, heart, lung, and kidney. Extremely low expression in liver and muscle. No expression in eye, adrenal, and white adipose tissues.

It localises to the secreted. May be involved in cell-cell interactions. No carboxypeptidase activity was found yet. The polypeptide is Probable carboxypeptidase X1 (Cpxm1) (Mus musculus (Mouse)).